A 130-amino-acid polypeptide reads, in one-letter code: Small ribosomal subunit protein uS9 (130 aa).

This sequence belongs to the universal ribosomal protein uS9 family.

This chain is Small ribosomal subunit protein uS9, found in Pseudomonas fluorescens (strain Pf0-1).